Consider the following 224-residue polypeptide: Putative adhesin RF_1314 (224 aa).

A signal peptide spans 1–22 (MKKLLLIAATSATILSSSISFA).

In Rickettsia felis (strain ATCC VR-1525 / URRWXCal2) (Rickettsia azadi), this protein is Putative adhesin RF_1314.